Consider the following 294-residue polypeptide: Putative S-adenosyl-L-methionine-dependent methyltransferase RHA1_ro00605 (294 aa).

Residues aspartate 120 and 149–150 contribute to the S-adenosyl-L-methionine site; that span reads DL.

It belongs to the UPF0677 family.

Its function is as follows. Exhibits S-adenosyl-L-methionine-dependent methyltransferase activity. The polypeptide is Putative S-adenosyl-L-methionine-dependent methyltransferase RHA1_ro00605 (Rhodococcus jostii (strain RHA1)).